A 133-amino-acid chain; its full sequence is Ribosome-binding factor A (133 aa).

Belongs to the RbfA family. As to quaternary structure, monomer. Binds 30S ribosomal subunits, but not 50S ribosomal subunits or 70S ribosomes.

The protein resides in the cytoplasm. One of several proteins that assist in the late maturation steps of the functional core of the 30S ribosomal subunit. Associates with free 30S ribosomal subunits (but not with 30S subunits that are part of 70S ribosomes or polysomes). Required for efficient processing of 16S rRNA. May interact with the 5'-terminal helix region of 16S rRNA. The chain is Ribosome-binding factor A from Citrobacter koseri (strain ATCC BAA-895 / CDC 4225-83 / SGSC4696).